A 37-amino-acid polypeptide reads, in one-letter code: Bacteriocin lactococcin MMFII (37 aa).

Cysteine 9 and cysteine 14 are oxidised to a cystine.

It is found in the secreted. Functionally, bacteriocin active against Listeria monocytogenes and Lactococcus cremoris. In Lactococcus lactis subsp. lactis (Streptococcus lactis), this protein is Bacteriocin lactococcin MMFII.